Here is a 298-residue protein sequence, read N- to C-terminus: Putative olfactory receptor 10D4 (298 aa).

Topologically, residues 1-23 are extracellular; that stretch reads MRNHTMVTEFILLGIPETEGLET. An N-linked (GlcNAc...) asparagine glycan is attached at Asn-3. Residues 24-44 traverse the membrane as a helical segment; sequence ALLFLFSSFYLCTLLGNVLIL. At 45-52 the chain is on the cytoplasmic side; it reads TAIISSTR. A helical membrane pass occupies residues 53–73; the sequence is LHTPMYFFLGNLSIFDLGFSS. The Extracellular segment spans residues 74–97; the sequence is TTVPKMLFYLSGNSHAISYAGCVS. Cys-95 and Cys-187 are disulfide-bonded. A helical transmembrane segment spans residues 98–118; sequence QLFFYHFLGCTECFLYTVMAC. Over 119-137 the chain is Cytoplasmic; the sequence is DRFVAICFPLRYTVIMNHR. Residues 138–158 traverse the membrane as a helical segment; the sequence is VCFMLATGTWMIGCVHAMILT. At 159 to 195 the chain is on the extracellular side; that stretch reads PLTFQLPYCGPNKVGYYFCDIPAVLPLACKDTSLAQR. Residues 196–215 form a helical membrane-spanning segment; sequence VGFTNVGLLSLICFFLILVS. Residues 216–235 are Cytoplasmic-facing; it reads YTCIGISISKIRSAEGRQRA. A helical transmembrane segment spans residues 236-256; sequence FSTCSAHLTAILCAYGPVIVI. The Extracellular segment spans residues 257–267; that stretch reads YLQPNPSALLG. Residues 268 to 288 traverse the membrane as a helical segment; it reads SIIQILNNLVTPMLNPLIYSL. Topologically, residues 289–298 are cytoplasmic; the sequence is RNKDVKSDQP.

It belongs to the G-protein coupled receptor 1 family.

The protein resides in the cell membrane. Functionally, odorant receptor. This chain is Putative olfactory receptor 10D4 (OR10D4P), found in Homo sapiens (Human).